The chain runs to 478 residues: Septin-4 (478 aa).

2 disordered regions span residues 40–74 (DFSGNESCHPPEAKTWASRPQVLEPRPQAPDLYDD) and 87–115 (ADNQQYFCAPAPLSPSARPRSPWGKLDPY). Residues 95 to 108 (APAPLSPSARPRSP) show a composition bias toward low complexity. Phosphoserine is present on residues Ser117 and Ser118. A Septin-type G domain is found at 141 to 414 (KGFDFTLMVA…ENYRAQCIQS (274 aa)). Residues 151–158 (GESGLGKS) form a G1 motif region. GTP-binding positions include 151 to 158 (GESGLGKS) and Thr185. Residues 208–211 (DTPG) are G3 motif. The tract at residues 289-292 (AKAD) is G4 motif. Position 290–298 (290–298 (KADTLTPPE)) interacts with GTP. At Ser325 the chain carries Phosphoserine. GTP is bound by residues Gly348 and Arg363. The disordered stretch occupies residues 428-448 (LTRESGTDFPIPAVPPGTDPE). Ser432 is subject to Phosphoserine. The residue at position 434 (Thr434) is a Phosphothreonine. Residues 446–478 (DPETEKLIREKDEELRRMQEILHKIQKQMKETY) adopt a coiled-coil conformation.

Belongs to the TRAFAC class TrmE-Era-EngA-EngB-Septin-like GTPase superfamily. Septin GTPase family. In terms of assembly, septins polymerize into heterooligomeric protein complexes that form filaments, and can associate with cellular membranes, actin filaments and microtubules. GTPase activity is required for filament formation. Interacts with SEPTIN8. Component of a septin core octameric complex consisting of SEPTIN12, SEPTIN7, SEPTIN6 and SEPTIN2 or SEPTIN4 in the order 12-7-6-2-2-6-7-12 or 12-7-6-4-4-6-7-12. Interacts with SEPTIN14 (via C-terminus). Interacts with DYRK1A. Interacts with SLC6A3/DAT and SNCA/alpha-synuclein. Interacts with STX1A; in the striatum. Interacts with XIAP (via BIR3 domain) following the induction of apoptosis. Interacts with AREL1 (via HECT domain); in the cytoplasm following induction of apoptosis. In terms of processing, ubiquitinated by AREL1. Post-translationally, phosphorylated by DYRK1A.

It localises to the cytoplasm. Its subcellular location is the cell projection. It is found in the cilium. The protein localises to the flagellum. The protein resides in the cytoplasmic vesicle. It localises to the secretory vesicle. Its subcellular location is the axon. It is found in the dendrite. The protein localises to the perikaryon. The protein resides in the synapse. In terms of biological role, filament-forming cytoskeletal GTPase. Pro-apoptotic protein involved in LGR5-positive intestinal stem cell and Paneth cell expansion in the intestines, via its interaction with XIAP. May also play a role in the regulation of cell fate in the intestine. Positive regulator of apoptosis involved in hematopoietic stem cell homeostasis; via its interaction with XIAP. Negative regulator of repair and hair follicle regeneration in response to injury, due to inhibition of hair follicle stem cell proliferation, potentially via its interaction with XIAP. Plays an important role in male fertility and sperm motility. During spermiogenesis, essential for the establishment of the annulus (a fibrous ring structure connecting the midpiece and the principal piece of the sperm flagellum) which is a requisite for the structural and mechanical integrity of the sperm. Involved in the migration of cortical neurons and the formation of neuron leading processes during embryonic development. Required for dopaminergic metabolism in presynaptic autoreceptors; potentially via activity as a presynaptic scaffold protein. The chain is Septin-4 from Macaca fascicularis (Crab-eating macaque).